The chain runs to 473 residues: Major myo-inositol transporter IolT (473 aa).

12 consecutive transmembrane segments (helical) span residues 14 to 34 (IILV…VLNG), 49 to 69 (AFTE…GAVF), 83 to 103 (ILFL…APNV), 111 to 131 (FVLG…LAEM), 146 to 166 (LMIV…GTTM), 172 to 192 (VWRF…FGMI), 256 to 276 (IVFI…NSIM), 295 to 315 (IGNI…IWLL), 325 to 345 (MTGL…SLVL), 350 to 370 (ALPY…QGAI), 389 to 409 (LGMG…SFTF), and 411 to 431 (ILLA…LGIC).

The protein belongs to the major facilitator superfamily. Sugar transporter (TC 2.A.1.1) family.

It is found in the cell membrane. It functions in the pathway polyol metabolism; myo-inositol degradation into acetyl-CoA. Functionally, major myo-inositol uptake transporter. The polypeptide is Major myo-inositol transporter IolT (iolT) (Bacillus subtilis (strain 168)).